Reading from the N-terminus, the 58-residue chain is Large ribosomal subunit protein eL37 (58 aa).

Zn(2+)-binding residues include cysteine 20, cysteine 23, cysteine 35, and cysteine 38. The C4-type zinc finger occupies 20–38 (CRRCGEKSYHVKKERCSSC). Residues 39 to 58 (GFGDSASRRGYAWQSKSGDN) are disordered.

It belongs to the eukaryotic ribosomal protein eL37 family. Zn(2+) serves as cofactor.

In terms of biological role, binds to the 23S rRNA. The chain is Large ribosomal subunit protein eL37 from Halorubrum lacusprofundi (strain ATCC 49239 / DSM 5036 / JCM 8891 / ACAM 34).